Consider the following 277-residue polypeptide: Large ribosomal subunit protein uL2 (277 aa).

The tract at residues 219–277 (TVRGSVMNPNDHPHGGGEGRSPIGHPSPRTPWGKPALGYKTRKNKKYSDRFIVKRRHDK) is disordered.

This sequence belongs to the universal ribosomal protein uL2 family. Part of the 50S ribosomal subunit. Forms a bridge to the 30S subunit in the 70S ribosome.

Its function is as follows. One of the primary rRNA binding proteins. Required for association of the 30S and 50S subunits to form the 70S ribosome, for tRNA binding and peptide bond formation. It has been suggested to have peptidyltransferase activity; this is somewhat controversial. Makes several contacts with the 16S rRNA in the 70S ribosome. The polypeptide is Large ribosomal subunit protein uL2 (Clostridium botulinum (strain ATCC 19397 / Type A)).